We begin with the raw amino-acid sequence, 261 residues long: RING finger and CHY zinc finger domain-containing protein 1 (261 aa).

The CHY-type zinc finger occupies 13 to 80 (QERGQRGCEH…AQQTCEECST (68 aa)). Zn(2+)-binding residues include cysteine 20, histidine 22, cysteine 33, cysteine 34, cysteine 40, cysteine 43, histidine 44, histidine 50, cysteine 62, cysteine 65, cysteine 75, cysteine 78, cysteine 87, cysteine 90, histidine 101, cysteine 102, cysteine 105, cysteine 108, histidine 118, cysteine 119, cysteine 122, cysteine 125, histidine 134, and cysteine 136. The CTCHY-type zinc finger occupies 82–144 (FGEYYCDICH…KCIENVSRQN (63 aa)). Residues 145–189 (CPICLEDIHTSRVVAHVLPCGHLLHRTCYEEMLKEGYRCPLCMHS) form an RING-type zinc finger. Serine 257 bears the Phosphoserine mark.

Monomer and homodimer. Interacts with AR, MDM2, KAT5, PLAG1, PLAGL2, COPE, UBE2D2 and GORAB/NTKLBP1. In terms of processing, subject to ubiquitination and proteasomal degradation. Interaction with PLAGL2 or KAT5 enhances protein stability.

It localises to the nucleus. Its subcellular location is the nucleus speckle. The protein resides in the cytoplasm. The enzyme catalyses S-ubiquitinyl-[E2 ubiquitin-conjugating enzyme]-L-cysteine + [acceptor protein]-L-lysine = [E2 ubiquitin-conjugating enzyme]-L-cysteine + N(6)-ubiquitinyl-[acceptor protein]-L-lysine.. It participates in protein modification; protein ubiquitination. Functionally, E3 ubiquitin-protein ligase that mediates ubiquitination of target proteins, including p53/TP53, TP73, HDAC1 and CDKN1B. Mediates ubiquitination and degradation of p53/TP53; preferentially acts on tetrameric p53/TP53. Catalyzes monoubiquitinates the translesion DNA polymerase POLH. Involved in the ribosome-associated quality control (RQC) pathway, which mediates the extraction of incompletely synthesized nascent chains from stalled ribosomes: RCHY1 acts downstream of NEMF and recognizes CAT tails associated with stalled nascent chains, leading to their ubiquitination and degradation. Has no E3 ubiquitin-protein ligase activity. The sequence is that of RING finger and CHY zinc finger domain-containing protein 1 (RCHY1) from Homo sapiens (Human).